We begin with the raw amino-acid sequence, 370 residues long: D-alanine--D-alanine ligase (370 aa).

The region spanning 144-352 (KKIFADAGIP…YGALIERLVD (209 aa)) is the ATP-grasp domain. An ATP-binding site is contributed by 177–232 (EEVLTYPVFVKPANLGSSVGISKATNKKELADAMTEAFLYDRRVVVEQGVVAREIE). Mg(2+) contacts are provided by D306, E319, and N321.

This sequence belongs to the D-alanine--D-alanine ligase family. The cofactor is Mg(2+). Mn(2+) is required as a cofactor.

The protein resides in the cytoplasm. The enzyme catalyses 2 D-alanine + ATP = D-alanyl-D-alanine + ADP + phosphate + H(+). It functions in the pathway cell wall biogenesis; peptidoglycan biosynthesis. Functionally, cell wall formation. The chain is D-alanine--D-alanine ligase from Listeria monocytogenes serotype 4b (strain F2365).